We begin with the raw amino-acid sequence, 543 residues long: Malate synthase (543 aa).

R162 functions as the Proton acceptor in the catalytic mechanism. D449 serves as the catalytic Proton donor.

It belongs to the malate synthase family.

It catalyses the reaction glyoxylate + acetyl-CoA + H2O = (S)-malate + CoA + H(+). Its pathway is carbohydrate metabolism; glyoxylate cycle; (S)-malate from isocitrate: step 2/2. This is Malate synthase (masA) from Dictyostelium discoideum (Social amoeba).